A 159-amino-acid polypeptide reads, in one-letter code: Phosphopantetheine adenylyltransferase (159 aa).

Thr10 serves as a coordination point for substrate. Residues 10 to 11 and His18 each bind ATP; that span reads TF. The substrate site is built by Lys42, Met74, and Arg88. Residues 89 to 91, Glu99, and 124 to 130 contribute to the ATP site; these read GLR and WSFISSS.

This sequence belongs to the bacterial CoaD family. As to quaternary structure, homohexamer. It depends on Mg(2+) as a cofactor.

It localises to the cytoplasm. It catalyses the reaction (R)-4'-phosphopantetheine + ATP + H(+) = 3'-dephospho-CoA + diphosphate. It functions in the pathway cofactor biosynthesis; coenzyme A biosynthesis; CoA from (R)-pantothenate: step 4/5. In terms of biological role, reversibly transfers an adenylyl group from ATP to 4'-phosphopantetheine, yielding dephospho-CoA (dPCoA) and pyrophosphate. The sequence is that of Phosphopantetheine adenylyltransferase from Yersinia pseudotuberculosis serotype I (strain IP32953).